The sequence spans 98 residues: Acylphosphatase (98 aa).

In terms of domain architecture, Acylphosphatase-like spans 12-98 (TYYVRVRGVV…DKRFERFQQH (87 aa)). Active-site residues include arginine 27 and asparagine 45.

It belongs to the acylphosphatase family.

It catalyses the reaction an acyl phosphate + H2O = a carboxylate + phosphate + H(+). This Burkholderia mallei (strain NCTC 10247) protein is Acylphosphatase (acyP).